Consider the following 112-residue polypeptide: uncharacterized protein (112 aa).

This is an uncharacterized protein from Methanocaldococcus jannaschii (strain ATCC 43067 / DSM 2661 / JAL-1 / JCM 10045 / NBRC 100440) (Methanococcus jannaschii).